Here is a 109-residue protein sequence, read N- to C-terminus: uncharacterized protein (109 aa).

Residues 26-48 (VTSIMTVSDINYLLLYLIILLTL) traverse the membrane as a helical segment.

The protein localises to the membrane. This is an uncharacterized protein from Saccharomyces cerevisiae (strain ATCC 204508 / S288c) (Baker's yeast).